The following is an 8384-amino-acid chain: Mucin-19 (8384 aa).

A signal peptide spans 1 to 21; it reads MKLILWYLVVALWCFFKDVEA. Disordered regions lie at residues 33–197, 222–247, 279–305, and 332–467; these read AASR…YGAG, SKAD…PDAG, GDTG…IDLG, and QEGF…PEAT. Low complexity-rich tracts occupy residues 35 to 48 and 88 to 98; these read SRSG…SSSG and GGFFNSSSSSG. Basic and acidic residues predominate over residues 169–184; sequence DKSRERWDAGNSRSED. Residues 187-197 show a composition bias toward polar residues; sequence ADSTNTRYGAG. Residues 279-299 show a composition bias toward polar residues; that stretch reads GDTGISSKTVEGNQTSSSGGS. A compositionally biased stretch (low complexity) spans 359–369; that stretch reads GSDSSSSGDSS. The segment covering 370–381 has biased composition (polar residues); sequence ARNGFENSSGIS. 2 stretches are compositionally biased toward low complexity: residues 424–435 and 443–452; these read SDSGGNTWSSDS and TSSSEYSTSG. VWFD domains lie at 478 to 649, 815 to 995, and 1274 to 1447; these read GEIS…QHCN, GRCK…SSCI, and TICH…QECS. 8 disulfides stabilise this stretch: C502–C648, C817–C952, C838–C994, C857–C865, C1276–C1411, C1298–C1446, C1307–C1408, and C1323–C1330. 27 disordered regions span residues 1680–1699, 1732–2464, 2484–2526, 2540–2827, 2850–2917, 2984–3027, 3075–3368, 3386–3428, 3585–3628, 3667–3736, 4105–4147, 4187–4251, 4315–4390, 4414–4455, 4510–4583, 4790–4843, 4895–4930, 5130–5161, 5429–5452, 5464–5494, 5880–5918, 6069–6403, 6440–6918, 6953–7223, 7250–7749, 7783–7975, and 8020–8133; these read TSSS…PFTT, AGTT…KSPG, LESE…TEGS, RPLD…MTGT, STVG…LGTI, VTTG…SGTT, GTTG…GKTG, TTRL…GKTG, ETTG…TNGL, GSSA…TGLP, TGSS…NGLS, SAGV…AEVT, GLSA…SARV, TGSS…TNGQ, TGTT…TGLP, SSAG…AGVT, TGTT…GVTG, VTGT…VTGK, GPSA…GTTG, GTSI…SAEM, TGKT…STES, GRAT…ETTK, GTSE…TGFK, SFST…SKTG, KNGS…EAGS, and SGRS…VSQP. 3 stretches are compositionally biased toward low complexity: residues 1732-1746, 1772-1813, and 1820-1833; these read AGTT…TGAA, PGEA…TTGP, and GATS…EGMS. A compositionally biased stretch (polar residues) spans 1835–1860; sequence VTGQSLGSTAGSDSEITAKTSFTGSS. Residues 1868 to 1879 are compositionally biased toward low complexity; it reads PSPGSPGHFSGG. The span at 1880–1905 shows a compositional bias: polar residues; it reads TTEWGNVATTGAAGENTSGALGSTEG. Residues 1909–1921 show a composition bias toward low complexity; it reads ATTSAGSGNTAGT. Positions 1950-1968 are enriched in polar residues; that stretch reads GSSTPGEADIGNTSFGKSG. 2 stretches are compositionally biased toward low complexity: residues 1969–1983 and 2013–2049; these read TPTV…SPVS and GGKI…SGPS. Polar residues predominate over residues 2055–2100; the sequence is NYGQSSEIPGTIKSSSDVSGTMGQSDTTSGPSVAVTRTSEQSSGVT. Low complexity-rich tracts occupy residues 2132–2147 and 2159–2170; these read TTGS…GPSS and GSGTSGQSVTGS. Polar residues-rich tracts occupy residues 2171–2186 and 2209–2225; these read RATG…TVSF and GSGT…TTRL. Composition is skewed to low complexity over residues 2233–2246 and 2280–2313; these read TESS…TTPS and SGPS…TKPS. The approximate repeats of G-V-T-G-T-T-G-P-S-A stretch occupies residues 2238-6086; it reads GVTGTTTPSA…GVTGTTGLSA (3849 aa). Polar residues-rich tracts occupy residues 2316–2332 and 2354–2372; these read RTGT…TTEP and ATES…TTIP. Over residues 2403–2419 the composition is skewed to gly residues; sequence SSGGSGATRSSGGGMGT. Residues 2420–2441 show a composition bias toward low complexity; the sequence is TGQSTARSETTGPLFGLTGTFG. The span at 2442 to 2460 shows a compositional bias: polar residues; the sequence is QSATVTGTSSNSAGVTTPE. Low complexity-rich tracts occupy residues 2512–2526, 2545–2571, and 2578–2589; these read SAGE…TEGS, GSGT…TTRK, and TTGLSGLTGTSG. Composition is skewed to polar residues over residues 2595–2610 and 2638–2653; these read TGTS…TSEK and TRPS…QSAR. Residues 2654–2681 show a composition bias toward low complexity; that stretch reads VTETVGASAGVTGTTGPSTEGSGATGPS. Composition is skewed to polar residues over residues 2695–2748 and 2755–2770; these read SGTT…TGTT and TETT…TTGP. Over residues 2787-2799 the composition is skewed to low complexity; it reads ATRSSGGETETTG. 3 stretches are compositionally biased toward polar residues: residues 2800-2827, 2850-2859, and 2874-2892; these read QSAV…MTGT, STVGLETTRP, and AQTT…QSAR. The span at 2894–2910 shows a compositional bias: low complexity; the sequence is TGASGPSVGVTGTTGPA. A compositionally biased stretch (polar residues) spans 2984–2998; that stretch reads VTTGPSVTGVETTAK. A compositionally biased stretch (low complexity) spans 2999–3027; that stretch reads TTSGGLSTTISSVGGTGTTGQSPERSGTT. The segment covering 3099–3109 has biased composition (polar residues); the sequence is PSITGSGTTRP. Residues 3114 to 3130 show a composition bias toward low complexity; sequence SWTAGTSSGGHSTTSPS. Residues 3131-3159 are compositionally biased toward polar residues; it reads VRGTETTGQSAAESVTTGPVTGYTETSGP. Low complexity predominate over residues 3172–3188; the sequence is TVTQTTGSSAAVSGTTV. Residues 3189–3224 are compositionally biased toward polar residues; the sequence is QSLTVSGTTRPSSGQTEITGSSVKESGTTESSAVRS. Over residues 3225–3277 the composition is skewed to low complexity; it reads GTTGPTAGVTGTNGPSSAGVTGITGSSPGVTGTTGSSPGVTGTTGSSARSGTS. 2 stretches are compositionally biased toward polar residues: residues 3303–3317 and 3324–3362; these read ITGT…TGTT and TGTT…SSAG. Residues 3390-3417 show a composition bias toward low complexity; that stretch reads SAGVTGTTGPSPGVTGTTGTPAGVTGTT. Polar residues-rich tracts occupy residues 3702-3728 and 4105-4116; these read VTGT…TTGP and TGSSARSGTSIP. The span at 4117-4126 shows a compositional bias: low complexity; that stretch reads SVGETGTTRT. Polar residues predominate over residues 4320-4346; that stretch reads VTGTTRPSAGVTGTTGQSAEVTGTTEP. 2 stretches are compositionally biased toward low complexity: residues 4347–4385 and 4414–4426; these read SAGL…GTTG and TGSS…STPS. Composition is skewed to low complexity over residues 5469–5494 and 5889–5903; these read VTGT…GTTG and TGTT…TTTG. Polar residues-rich tracts occupy residues 5908–5918, 6071–6103, and 6111–6121; these read ITGTNGLSAEM, KTRS…TTKT, and TRPSAGITATT. Over residues 6156-6168 the composition is skewed to low complexity; it reads TTTGTTGVTTGTT. 2 stretches are compositionally biased toward polar residues: residues 6217–6248 and 6257–6275; these read EVST…TATT and APGS…SAST. The segment covering 6284-6295 has biased composition (low complexity); the sequence is TGSTRGVRTTGS. Composition is skewed to polar residues over residues 6303–6323 and 6336–6346; these read GEFS…TTLT and ESTTSLPQSAK. Residues 6378–6389 are compositionally biased toward low complexity; the sequence is SGTTISSGGSHT. Composition is skewed to polar residues over residues 6440 to 6457 and 6470 to 6503; these read GRAT…TSQA and TTIT…TTYI. The segment covering 6507–6523 has biased composition (low complexity); sequence GTTRGGLATATTGAFSG. Over residues 6560–6571 the composition is skewed to polar residues; it reads TTFTSGGSHTEA. A compositionally biased stretch (low complexity) spans 6581–6597; sequence TGTESRAATTRAAPGTT. The segment covering 6599-6608 has biased composition (polar residues); sequence VPGSSNTGAT. Positions 6612–6628 are enriched in low complexity; the sequence is GGSATTRGRITTATTGA. Polar residues-rich tracts occupy residues 6669 to 6680 and 6689 to 6698; these read RITSGGSYTATT and APGSSNTGAT. Residues 6707 to 6718 show a composition bias toward low complexity; it reads TRGRITTATTGA. Over residues 6752-6766 the composition is skewed to polar residues; the sequence is TTLTGDRSSTGSESR. Residues 6767-6781 are compositionally biased toward low complexity; the sequence is TATTGVAPGTTVAPG. Residues 6794 to 6817 are compositionally biased toward polar residues; that stretch reads SGTTNIGRATGATTSIVGSDTSQA. Low complexity predominate over residues 6827 to 6842; that stretch reads SPGASSTSQSSRPGTS. The segment covering 6843–6875 has biased composition (polar residues); sequence VTPDSSASESETVTTKEFSGTTAISRTSHTGTP. The segment covering 6887–6901 has biased composition (low complexity); the sequence is TATTGVAPGTTVAPG. 2 stretches are compositionally biased toward polar residues: residues 6902 to 6911 and 6953 to 6964; these read SSNTEATTSV and GTSEVAPSTTVA. A compositionally biased stretch (low complexity) spans 6966–6994; sequence GSFSTAATTSPGASGTTGVTTTTKTTTSL. Positions 7006–7041 are enriched in polar residues; it reads SATTGAPGSRTGTAGVPSATTVSPGSSNSEATTSVG. Residues 7045–7074 are compositionally biased toward low complexity; that stretch reads KTGAETITEATTSTEGTGTSGTGFKTGTSE. A compositionally biased stretch (polar residues) spans 7085–7094; it reads SFSTAATTSP. Over residues 7095–7112 the composition is skewed to low complexity; that stretch reads GASGMTGVTTTTKTTTSL. A compositionally biased stretch (polar residues) spans 7143–7158; that stretch reads TRVTPGSSNSEATTSV. Composition is skewed to low complexity over residues 7201–7215 and 7250–7276; these read SGSS…TEGT and SFST…TTSL. The segment covering 7293–7311 has biased composition (polar residues); that stretch reads SGTTVAPGSSNSEATTSVG. Residues 7379 to 7397 show a composition bias toward low complexity; the sequence is TTSTKGTGTSGTGFKTGTS. The segment covering 7403–7421 has biased composition (polar residues); it reads TTVSPGSFSTATISPGASR. Positions 7422–7435 are enriched in low complexity; it reads TTGAAPAAETTTSL. Residues 7465–7483 show a composition bias toward polar residues; it reads SATTIAPGSSNSEATTSLG. Positions 7525–7537 are enriched in gly residues; sequence PLGGASGTSGGYV. 2 stretches are compositionally biased toward polar residues: residues 7544 to 7557 and 7571 to 7596; these read PTTS…SRTI and AGTS…TSPG. The span at 7600–7613 shows a compositional bias: low complexity; that stretch reads MTGVRTTSKTTTSL. Polar residues-rich tracts occupy residues 7642 to 7669 and 7698 to 7708; these read SSRT…SGTG and SFSTAATTSPG. The segment covering 7715-7732 has biased composition (low complexity); it reads TGPTAETTTFLGGSSTTG. A compositionally biased stretch (polar residues) spans 7783–7811; that stretch reads KNGSMTTALGSQLSSSQTVIPGSSGTISH. Low complexity predominate over residues 7812 to 7828; the sequence is TTVAPGSSVTGTTTGAS. A compositionally biased stretch (polar residues) spans 7830 to 7851; it reads DQVTGSKTGTTGVALSTTVAPG. Residues 7852-7861 are compositionally biased toward low complexity; that stretch reads SSSTEATTST. Residues 7862–7891 are compositionally biased toward polar residues; it reads GVHRTTVVGQKTGATTRGSAKQGTRSTIEA. Positions 7892-7917 are enriched in low complexity; sequence TTSFRGTGTTGSGMNTGTTGVVSGNT. The segment covering 7918 to 7934 has biased composition (polar residues); sequence ISPSSFNTEATSGTSER. Low complexity predominate over residues 7938–7952; that stretch reads GSEIGTTGIVSGTTV. 4 stretches are compositionally biased toward polar residues: residues 7953-7965, 8020-8040, 8048-8081, and 8110-8120; these read APGS…TTSL, SGRS…SGTT, TGNT…SISG, and ETGVQTGSTLV. The VWFC domain maps to 8159–8225; that stretch reads PVCHGPLGEE…DTCCEIGYCE (67 aa). 4 cysteine pairs are disulfide-bonded: C8288-C8339, C8306-C8353, C8315-C8369, and C8319-C8371. In terms of domain architecture, CTCK spans 8288 to 8376; the sequence is CKNNCRSSLV…TTCSCLDICQ (89 aa).

In terms of tissue distribution, expressed corneal epithelial cells, conjunctival goblet and epithelial cells and lacrimal gland cells (at protein level). Expressed by mucous cells of the submandibular gland and submucosal gland of the trachea. Expressed by middle ear epithelial cells.

It is found in the secreted. May function in ocular mucus homeostasis. The sequence is that of Mucin-19 (MUC19) from Homo sapiens (Human).